Reading from the N-terminus, the 186-residue chain is Peptidyl-tRNA hydrolase (186 aa).

Tyr-14 contacts tRNA. The active-site Proton acceptor is the His-19. TRNA contacts are provided by Tyr-64, Asn-66, and Asn-112.

It belongs to the PTH family. As to quaternary structure, monomer.

It localises to the cytoplasm. It catalyses the reaction an N-acyl-L-alpha-aminoacyl-tRNA + H2O = an N-acyl-L-amino acid + a tRNA + H(+). Hydrolyzes ribosome-free peptidyl-tRNAs (with 1 or more amino acids incorporated), which drop off the ribosome during protein synthesis, or as a result of ribosome stalling. Its function is as follows. Catalyzes the release of premature peptidyl moieties from peptidyl-tRNA molecules trapped in stalled 50S ribosomal subunits, and thus maintains levels of free tRNAs and 50S ribosomes. This Geobacillus thermodenitrificans (strain NG80-2) protein is Peptidyl-tRNA hydrolase.